The sequence spans 506 residues: Glutamate--tRNA ligase (506 aa).

Residues proline 12–threonine 22 carry the 'HIGH' region motif. The short motif at lysine 253 to arginine 257 is the 'KMSKS' region element. Lysine 256 provides a ligand contact to ATP.

Belongs to the class-I aminoacyl-tRNA synthetase family. Glutamate--tRNA ligase type 1 subfamily. As to quaternary structure, monomer.

The protein resides in the cytoplasm. The catalysed reaction is tRNA(Glu) + L-glutamate + ATP = L-glutamyl-tRNA(Glu) + AMP + diphosphate. Catalyzes the attachment of glutamate to tRNA(Glu) in a two-step reaction: glutamate is first activated by ATP to form Glu-AMP and then transferred to the acceptor end of tRNA(Glu). This chain is Glutamate--tRNA ligase, found in Chlamydia muridarum (strain MoPn / Nigg).